A 321-amino-acid polypeptide reads, in one-letter code: Methionyl-tRNA formyltransferase (321 aa).

112 to 115 (SILP) contacts (6S)-5,6,7,8-tetrahydrofolate.

Belongs to the Fmt family.

The catalysed reaction is L-methionyl-tRNA(fMet) + (6R)-10-formyltetrahydrofolate = N-formyl-L-methionyl-tRNA(fMet) + (6S)-5,6,7,8-tetrahydrofolate + H(+). Attaches a formyl group to the free amino group of methionyl-tRNA(fMet). The formyl group appears to play a dual role in the initiator identity of N-formylmethionyl-tRNA by promoting its recognition by IF2 and preventing the misappropriation of this tRNA by the elongation apparatus. The chain is Methionyl-tRNA formyltransferase from Shewanella piezotolerans (strain WP3 / JCM 13877).